Here is a 319-residue protein sequence, read N- to C-terminus: Ankyrin repeat domain-containing protein 1 (319 aa).

Residues 46–65 (KTLPANSVKQGEEQRKSEKL) form a disordered region. A coiled-coil region spans residues 53-89 (VKQGEEQRKSEKLREAELKKKKLEQRSKLENLEDLEI). Positions 55 to 65 (QGEEQRKSEKL) are enriched in basic and acidic residues. 5 ANK repeats span residues 152 to 181 (YKRT…QIEF), 185 to 214 (LEST…KISA), 218 to 247 (LLST…DLNA), 251 to 280 (EGDT…DLKV), and 284 to 315 (AGKT…KNSR).

In terms of assembly, interacts with TTN/titin and YBX1. Expressed in heart, cardiac muscle.

The protein resides in the nucleus. May play an important role in endothelial cell activation. May act as a nuclear transcription factor that negatively regulates the expression of cardiac genes. The protein is Ankyrin repeat domain-containing protein 1 (Ankrd1) of Mus musculus (Mouse).